A 130-amino-acid polypeptide reads, in one-letter code: Small ribosomal subunit protein uS8 (130 aa).

This sequence belongs to the universal ribosomal protein uS8 family. In terms of assembly, part of the 30S ribosomal subunit. Contacts proteins S5 and S12.

Its function is as follows. One of the primary rRNA binding proteins, it binds directly to 16S rRNA central domain where it helps coordinate assembly of the platform of the 30S subunit. This is Small ribosomal subunit protein uS8 from Histophilus somni (strain 129Pt) (Haemophilus somnus).